Reading from the N-terminus, the 215-residue chain is UPF0319 protein VV2_0960 (215 aa).

Positions 1–21 (MNIIKPLTCILAMSISGLATA) are cleaved as a signal peptide.

Belongs to the UPF0319 family.

In Vibrio vulnificus (strain CMCP6), this protein is UPF0319 protein VV2_0960.